The primary structure comprises 689 residues: Glycine--tRNA ligase beta subunit (689 aa).

The protein belongs to the class-II aminoacyl-tRNA synthetase family. Tetramer of two alpha and two beta subunits.

Its subcellular location is the cytoplasm. The catalysed reaction is tRNA(Gly) + glycine + ATP = glycyl-tRNA(Gly) + AMP + diphosphate. The protein is Glycine--tRNA ligase beta subunit of Pectobacterium carotovorum subsp. carotovorum (strain PC1).